Reading from the N-terminus, the 163-residue chain is NADH-quinone oxidoreductase subunit I (163 aa).

2 consecutive 4Fe-4S ferredoxin-type domains span residues 53 to 83 (LRRY…IEAG) and 94 to 123 (VRYD…EGPN). The [4Fe-4S] cluster site is built by cysteine 63, cysteine 66, cysteine 69, cysteine 73, cysteine 103, cysteine 106, cysteine 109, and cysteine 113.

This sequence belongs to the complex I 23 kDa subunit family. As to quaternary structure, NDH-1 is composed of 14 different subunits. Subunits NuoA, H, J, K, L, M, N constitute the membrane sector of the complex. It depends on [4Fe-4S] cluster as a cofactor.

It is found in the cell inner membrane. The enzyme catalyses a quinone + NADH + 5 H(+)(in) = a quinol + NAD(+) + 4 H(+)(out). NDH-1 shuttles electrons from NADH, via FMN and iron-sulfur (Fe-S) centers, to quinones in the respiratory chain. The immediate electron acceptor for the enzyme in this species is believed to be ubiquinone. Couples the redox reaction to proton translocation (for every two electrons transferred, four hydrogen ions are translocated across the cytoplasmic membrane), and thus conserves the redox energy in a proton gradient. This is NADH-quinone oxidoreductase subunit I from Bartonella quintana (strain Toulouse) (Rochalimaea quintana).